We begin with the raw amino-acid sequence, 923 residues long: Probable ribosylation factor GTPase-activating protein cnt6 (923 aa).

Position 207 is a phosphoserine (serine 207). Basic and acidic residues predominate over residues 444–455 (TTRRDKGREMHR). The interval 444-476 (TTRRDKGREMHRSQVIQTSGRPKSMAPPSPSPI) is disordered. Residues 526-632 (KIFKEGLLLV…WIEAICEAAK (107 aa)) enclose the PH domain. Positions 714–837 (NIFIQMLRKT…AFIDFAGVDA (124 aa)) constitute an Arf-GAP domain. The C4-type zinc-finger motif lies at 730–754 (CADCGSVKDVTWCSINIPVVLCIEC).

It localises to the cytoplasm. The protein resides in the cell tip. GTPase-activating protein for the ADP ribosylation factor family. This is Probable ribosylation factor GTPase-activating protein cnt6 (cnt6) from Schizosaccharomyces pombe (strain 972 / ATCC 24843) (Fission yeast).